The chain runs to 282 residues: Protein DOG1-like 3 (282 aa).

The region spanning 11-254 (EQLQKGCYYE…HEWGRVREEQ (244 aa)) is the DOG1 domain.

In Arabidopsis thaliana (Mouse-ear cress), this protein is Protein DOG1-like 3.